Consider the following 225-residue polypeptide: Protein-L-isoaspartate O-methyltransferase (225 aa).

Serine 75 is an active-site residue.

This sequence belongs to the methyltransferase superfamily. L-isoaspartyl/D-aspartyl protein methyltransferase family.

The protein localises to the cytoplasm. The catalysed reaction is [protein]-L-isoaspartate + S-adenosyl-L-methionine = [protein]-L-isoaspartate alpha-methyl ester + S-adenosyl-L-homocysteine. Its function is as follows. Catalyzes the methyl esterification of L-isoaspartyl residues in peptides and proteins that result from spontaneous decomposition of normal L-aspartyl and L-asparaginyl residues. It plays a role in the repair and/or degradation of damaged proteins. This chain is Protein-L-isoaspartate O-methyltransferase, found in Xanthomonas campestris pv. campestris (strain 8004).